A 463-amino-acid chain; its full sequence is MELRLYDTLTRDKRPFTPIDPANVRMYVCGPTVYDFAHIGNARPVIVFDVLFRLLRHLYGEAHVKYVRNITDVDDKINDRAARDYPGLPLNEAIRKVTEQTERQFHDDVDALGCLRPTVEPRATEHIGEMRSIIEKLVAGGFAYVEQDHVLFSPSAMNAANGVLPRYGSLANRSLDEMIAGARVDVAPYKRDATDFVLWKPSKPGEPSWPSPAGIATPGRPGWHIECSAMSWKHLGETFDIHGGGIDLVFPHHENEVAQSCCAFHTERMAQTWMHNGFLQVEGEKMSKSLGNFITIRELLATNKFGGRSWDGATLRLAMLKTHYRQPIDWTVDALHEAEKAILDWSDFAKDATPVRCDEVIAALTDDLNTPKMIAELHALRRAGKADELRGAMQLLGINPVVRAPVDLDATAKSLIEARTAARANKDWKESDRIRDELAAMGVVLKDGKDADGKSVTTWELAR.

Zn(2+) is bound at residue C29. Positions 31 to 41 (PTVYDFAHIGN) match the 'HIGH' region motif. Residues C227, H252, and E256 each contribute to the Zn(2+) site. Residues 285–289 (KMSKS) carry the 'KMSKS' region motif. Position 288 (K288) interacts with ATP.

The protein belongs to the class-I aminoacyl-tRNA synthetase family. Monomer. The cofactor is Zn(2+).

Its subcellular location is the cytoplasm. The catalysed reaction is tRNA(Cys) + L-cysteine + ATP = L-cysteinyl-tRNA(Cys) + AMP + diphosphate. This chain is Cysteine--tRNA ligase, found in Rhodopseudomonas palustris (strain ATCC BAA-98 / CGA009).